The primary structure comprises 698 residues: Ubiquitin-like modifier-activating enzyme ATG7 (698 aa).

An FAP motif motif is present at residues phenylalanine 11–proline 13. Residue lysine 41 forms a Glycyl lysine isopeptide (Lys-Gly) (interchain with G-Cter in ubiquitin) linkage. The Glycyl thioester intermediate role is filled by cysteine 567. Serine 693 is subject to Phosphoserine.

The protein belongs to the ATG7 family. As to quaternary structure, homodimer. Interacts with ATG3; this interaction is essential for the transfer of ATG8-like proteins's thioester from ATG7 to ATG3 and plays a role in the conjugation of ATG12 to ATG5. Interacts with ATG12. Interacts with ATG10. Forms intermediate conjugates with GABARAPL1. Forms intermediate conjugates with ATG8-like proteins such as GABARAP, GABARAPL2 or MAP1LC3A. Interacts with EP300 acetyltransferase. Interacts with FOXO1. Acetylated by EP300. In terms of processing, polyubiquitinated on Lys-41 via 'Lys-63'-linked ubiquitin by TRIM32; this modification positiely regulates ATG8 and ATG12 activating enzyme activity leading to initiation of autophagy under metabolic stress. As to expression, widely expressed, especially in kidney, liver, lymph nodes and bone marrow.

The protein localises to the cytoplasm. It localises to the preautophagosomal structure. E1-like activating enzyme involved in the 2 ubiquitin-like systems required for cytoplasm to vacuole transport (Cvt) and autophagy. Activates ATG12 for its conjugation with ATG5 as well as the ATG8 family proteins for their conjugation with phosphatidylethanolamine. Both systems are needed for the ATG8 association to Cvt vesicles and autophagosomes membranes. Facilitates LC3-I lipidation with phosphatidylethanolamine to form LC3-II which is found on autophagosomal membranes. Required for autophagic death induced by caspase-8 inhibition. Required for mitophagy which contributes to regulate mitochondrial quantity and quality by eliminating the mitochondria to a basal level to fulfill cellular energy requirements and preventing excess ROS production. Modulates p53/TP53 activity to regulate cell cycle and survival during metabolic stress. Also plays a key role in the maintenance of axonal homeostasis, the prevention of axonal degeneration, the maintenance of hematopoietic stem cells, the formation of Paneth cell granules, as well as in adipose differentiation. Plays a role in regulating the liver clock and glucose metabolism by mediating the autophagic degradation of CRY1 (clock repressor) in a time-dependent manner. This chain is Ubiquitin-like modifier-activating enzyme ATG7, found in Mus musculus (Mouse).